A 380-amino-acid polypeptide reads, in one-letter code: Cytochrome b (380 aa).

4 helical membrane passes run 34–54 (FGSL…LLAM), 78–99 (WLIR…YLHI), 114–134 (WNTG…GYVL), and 179–199 (FFAL…IHLT). Heme b is bound by residues histidine 84 and histidine 98. Heme b is bound by residues histidine 183 and histidine 197. Histidine 202 is a binding site for a ubiquinone. Transmembrane regions (helical) follow at residues 227-247 (LKDI…ALFS), 289-309 (LGGV…PFLH), 321-341 (ISQL…WVGS), and 348-368 (FIII…VLFP).

Belongs to the cytochrome b family. The cytochrome bc1 complex contains 11 subunits: 3 respiratory subunits (MT-CYB, CYC1 and UQCRFS1), 2 core proteins (UQCRC1 and UQCRC2) and 6 low-molecular weight proteins (UQCRH/QCR6, UQCRB/QCR7, UQCRQ/QCR8, UQCR10/QCR9, UQCR11/QCR10 and a cleavage product of UQCRFS1). This cytochrome bc1 complex then forms a dimer. It depends on heme b as a cofactor.

It is found in the mitochondrion inner membrane. Functionally, component of the ubiquinol-cytochrome c reductase complex (complex III or cytochrome b-c1 complex) that is part of the mitochondrial respiratory chain. The b-c1 complex mediates electron transfer from ubiquinol to cytochrome c. Contributes to the generation of a proton gradient across the mitochondrial membrane that is then used for ATP synthesis. This is Cytochrome b (MT-CYB) from Pelecanoides georgicus (South Georgia diving petrel).